A 400-amino-acid polypeptide reads, in one-letter code: Phosphoglycerate kinase (400 aa).

Substrate contacts are provided by residues 21-23, Arg-36, 59-62, Arg-118, and Arg-151; these read DFN and HLGR. Residues Lys-201, Gly-293, Glu-324, and 353-356 each bind ATP; that span reads GGDS.

The protein belongs to the phosphoglycerate kinase family. Monomer.

It is found in the cytoplasm. The enzyme catalyses (2R)-3-phosphoglycerate + ATP = (2R)-3-phospho-glyceroyl phosphate + ADP. It participates in carbohydrate degradation; glycolysis; pyruvate from D-glyceraldehyde 3-phosphate: step 2/5. The protein is Phosphoglycerate kinase of Fervidobacterium nodosum (strain ATCC 35602 / DSM 5306 / Rt17-B1).